We begin with the raw amino-acid sequence, 572 residues long: Urease subunit alpha (572 aa).

One can recognise a Urease domain in the interval 136-572; sequence GGIDTHIHWI…VPLAQRYFLF (437 aa). Ni(2+)-binding residues include His141, His143, and Lys224. The residue at position 224 (Lys224) is an N6-carboxylysine. His226 lines the substrate pocket. Residues His253 and His279 each coordinate Ni(2+). His327 functions as the Proton donor in the catalytic mechanism. Asp367 contributes to the Ni(2+) binding site.

This sequence belongs to the metallo-dependent hydrolases superfamily. Urease alpha subunit family. As to quaternary structure, heterotrimer of UreA (gamma), UreB (beta) and UreC (alpha) subunits. Three heterotrimers associate to form the active enzyme. The cofactor is Ni cation. Post-translationally, carboxylation allows a single lysine to coordinate two nickel ions.

Its subcellular location is the cytoplasm. It carries out the reaction urea + 2 H2O + H(+) = hydrogencarbonate + 2 NH4(+). The protein operates within nitrogen metabolism; urea degradation; CO(2) and NH(3) from urea (urease route): step 1/1. This is Urease subunit alpha from Actinobacillus pleuropneumoniae serotype 3 (strain JL03).